The following is a 101-amino-acid chain: Small ribosomal subunit protein bS6 (101 aa).

Belongs to the bacterial ribosomal protein bS6 family.

In terms of biological role, binds together with bS18 to 16S ribosomal RNA. This Paenarthrobacter aurescens (strain TC1) protein is Small ribosomal subunit protein bS6.